The chain runs to 602 residues: ATP-dependent RNA helicase DeaD (602 aa).

Positions 6–34 match the Q motif motif; it reads MTFSSFGLNSCIITALNDIGYVQPSPIQA. Residues 37-208 enclose the Helicase ATP-binding domain; it reads IPYLIKGKDV…RRFMKNPKEI (172 aa). ATP is bound at residue 50 to 57; that stretch reads AQTGSGKT. A DEAD box motif is present at residues 156 to 159; that stretch reads DEAD. A Helicase C-terminal domain is found at 231-378; the sequence is KTDALIRFLE…EVNLPKSDFL (148 aa).

This sequence belongs to the DEAD box helicase family. DeaD/CsdA subfamily.

The protein resides in the cytoplasm. The catalysed reaction is ATP + H2O = ADP + phosphate + H(+). In terms of biological role, DEAD-box RNA helicase involved in various cellular processes at low temperature, including ribosome biogenesis, mRNA degradation and translation initiation. This is ATP-dependent RNA helicase DeaD from Buchnera aphidicola subsp. Baizongia pistaciae (strain Bp).